Reading from the N-terminus, the 559-residue chain is MAIPGRQYGLILPKKAQQLHPVLQKPSVFGNDSDDDDDETSVSESLQREAAKKQAMKQTKLEIQKALAEDSTVYEYDSIYDEMQKKKEESNPKLLLGKDRKPKYIHNLLKAVEIRKKEQEKRMEKKIQREREMEKGEFDDKEAFVTSAYKKKLQERAEEEERERRAAALEARLDVTKQRDLSGFYRHLLNQAVGEEEVPTCSFREARSEIKEEKSKGYSDEVSSESRIPPENCIRQTGVKVEENPDADSDFDAKSSENDEMEGDKGNCRREKGTETLSSHSKHHRNPARSPSSSEEREHGTQCHTKSSRSRGHEKREDEHQERPAREQDSYHTDRDSRKEKRDSHRHRESSHRDSHWKRHEEERLRGRDERERNDREWKREKDREKYPSREQERHRQRNNYDRHNEKGCEKEEKSKEKEEHVKARKERYENSDKYRDREKREVSVESSERNRDRKESSPNSRAKDRFVNQERASKMRDMEKDKERNPEKPSSSEASLGAKHRITEECQETGKEQERLHETVNKFAKRSNEETVTSARDRYLARQMARINAKTYIEKEDD.

The segment at 22–57 (VLQKPSVFGNDSDDDDDETSVSESLQREAAKKQAMK) is disordered. Phosphoserine is present on residues S27 and S33. The segment covering 32 to 41 (DSDDDDDETS) has biased composition (acidic residues). Positions 105 to 179 (IHNLLKAVEI…EARLDVTKQR (75 aa)) form a coiled coil. Residues 107-171 (NLLKAVEIRK…RERRAAALEA (65 aa)) form a necessary for alternative splicing activity region. The disordered stretch occupies residues 195–534 (EEEVPTCSFR…AKRSNEETVT (340 aa)). Residues 204-219 (REARSEIKEEKSKGYS) are compositionally biased toward basic and acidic residues. K211 is covalently cross-linked (Glycyl lysine isopeptide (Lys-Gly) (interchain with G-Cter in SUMO2)). Phosphoserine occurs at positions 249, 255, and 256. Over residues 251–274 (FDAKSSENDEMEGDKGNCRREKGT) the composition is skewed to basic and acidic residues. At T276 the chain carries Phosphothreonine. K282 participates in a covalent cross-link: Glycyl lysine isopeptide (Lys-Gly) (interchain with G-Cter in SUMO2). 3 stretches are compositionally biased toward basic and acidic residues: residues 314–343 (EKREDEHQERPAREQDSYHTDRDSRKEKRD), 351–488 (SHRD…RNPE), and 502–521 (RITEECQETGKEQERLHETV). A coiled-coil region spans residues 379 to 428 (KREKDREKYPSREQERHRQRNNYDRHNEKGCEKEEKSKEKEEHVKARKER). Residue S458 is modified to Phosphoserine.

This sequence belongs to the NSRP1 family. As to quaternary structure, interacts (via C-terminus) with SRSF1. Interacts (via C-terminus) with SRSF2.

It is found in the nucleus. The protein localises to the nucleus speckle. RNA-binding protein that mediates pre-mRNA alternative splicing regulation. This is Nuclear speckle splicing regulatory protein 1 (NSRP1) from Bos taurus (Bovine).